We begin with the raw amino-acid sequence, 341 residues long: Acetylpolyamine amidohydrolase (341 aa).

Substrate contacts are provided by tyrosine 19, glutamate 106, and glutamate 117. Histidine 159 serves as the catalytic Proton donor/acceptor. Residues aspartate 195, histidine 197, and aspartate 284 each contribute to the Zn(2+) site. Tyrosine 323 is a binding site for substrate.

This sequence belongs to the histone deacetylase family. In terms of assembly, homodimer. It depends on Zn(2+) as a cofactor.

The enzyme catalyses N-acetylputrescine + H2O = putrescine + acetate. It catalyses the reaction N-acetylcadaverine + H2O = cadaverine + acetate. It carries out the reaction N(1)-acetylspermine + H2O = spermine + acetate. The catalysed reaction is N(1)-acetylspermidine + H2O = spermidine + acetate. The enzyme catalyses N(8)-acetylspermidine + H2O = spermidine + acetate. It functions in the pathway amine and polyamine metabolism. With respect to regulation, zinc ions inhibit enzyme activity in a dose-dependent manner. Inhibited by KCl at concentrations above 10 mM. Inhibited by o-oxyquinoline in vitro, suggesting that it is a metalloprotein. Inhibited by various substrate N(8)-acetylspermidine analogs bearing different metal-binding groups such as trifluoromethylketone, thiol, or hydroxamate, and by hydroxamate analogs of short-chain acetyldiamines. Involved in polyamine metabolism. Catalyzes the deacetylation of various acetylated polyamines such as N-acetylputrescine, N-acetylcadaverine, N(1)-acetylspermine, N(1)-acetylspermidine and N(8)-acetylspermidine. In vitro, is also able to deacetylate L-Lys(epsilon-acetyl)coumarin, but has very low activity towards the larger tetrapeptide N-acetyl-L-Arg-L-His-L-Lys(epsilon-acetyl)-L-Lys(epsilon-acetyl)coumarin. In Mycoplana ramosa (Mycoplana bullata), this protein is Acetylpolyamine amidohydrolase.